Here is a 302-residue protein sequence, read N- to C-terminus: tRNA pseudouridine synthase B (302 aa).

Aspartate 47 serves as the catalytic Nucleophile.

This sequence belongs to the pseudouridine synthase TruB family. Type 1 subfamily.

It catalyses the reaction uridine(55) in tRNA = pseudouridine(55) in tRNA. Functionally, responsible for synthesis of pseudouridine from uracil-55 in the psi GC loop of transfer RNAs. The polypeptide is tRNA pseudouridine synthase B (Ruegeria sp. (strain TM1040) (Silicibacter sp.)).